We begin with the raw amino-acid sequence, 917 residues long: DNA mismatch repair protein spellchecker 1 (917 aa).

667-674 (GPNMGGKS) serves as a coordination point for ATP.

The protein belongs to the DNA mismatch repair MutS family. In terms of assembly, heterodimer of Msh2/Spel and Msh6.

The protein resides in the nucleus. Functionally, involved in postreplication mismatch repair. Binds specifically to DNA containing mismatched nucleotides thus providing a target for the excision repair processes characteristic of postreplication mismatch repair. The sequence is that of DNA mismatch repair protein spellchecker 1 (spel1) from Drosophila melanogaster (Fruit fly).